Consider the following 137-residue polypeptide: Small ribosomal subunit protein uS11 (137 aa).

The disordered stretch occupies residues glutamate 116–valine 137.

This sequence belongs to the universal ribosomal protein uS11 family. In terms of assembly, part of the 30S ribosomal subunit.

Its function is as follows. Located on the platform of the 30S subunit. In Pyrococcus furiosus (strain ATCC 43587 / DSM 3638 / JCM 8422 / Vc1), this protein is Small ribosomal subunit protein uS11.